A 297-amino-acid chain; its full sequence is Bifunctional protein FolD (297 aa).

NADP(+) is bound by residues 164 to 166, Ser-193, and Val-234; that span reads GRS.

The protein belongs to the tetrahydrofolate dehydrogenase/cyclohydrolase family. Homodimer.

The catalysed reaction is (6R)-5,10-methylene-5,6,7,8-tetrahydrofolate + NADP(+) = (6R)-5,10-methenyltetrahydrofolate + NADPH. The enzyme catalyses (6R)-5,10-methenyltetrahydrofolate + H2O = (6R)-10-formyltetrahydrofolate + H(+). It functions in the pathway one-carbon metabolism; tetrahydrofolate interconversion. Functionally, catalyzes the oxidation of 5,10-methylenetetrahydrofolate to 5,10-methenyltetrahydrofolate and then the hydrolysis of 5,10-methenyltetrahydrofolate to 10-formyltetrahydrofolate. This Natronomonas pharaonis (strain ATCC 35678 / DSM 2160 / CIP 103997 / JCM 8858 / NBRC 14720 / NCIMB 2260 / Gabara) (Halobacterium pharaonis) protein is Bifunctional protein FolD.